The sequence spans 302 residues: Exodeoxyribonuclease (302 aa).

It carries out the reaction Exonucleolytic cleavage in the 5'- to 3'-direction to yield nucleoside 5'-phosphates.. In terms of biological role, this enzyme is essential for phage DNA replication; it is believed to function in the removal of DNA-linked RNA primers. It is also necessary for host DNA degradation and phage genetic recombination. In Enterobacteria phage T3 (Bacteriophage T3), this protein is Exodeoxyribonuclease (6).